Consider the following 206-residue polypeptide: Large ribosomal subunit protein bL25 (206 aa).

A disordered region spans residues 168–206 (DPEESVVTVEVPEDASESTAAPEAAAPAADAAAPAADAK). Positions 184–206 (ESTAAPEAAAPAADAAAPAADAK) are enriched in low complexity.

This sequence belongs to the bacterial ribosomal protein bL25 family. CTC subfamily. Part of the 50S ribosomal subunit; part of the 5S rRNA/L5/L18/L25 subcomplex. Contacts the 5S rRNA. Binds to the 5S rRNA independently of L5 and L18.

Functionally, this is one of the proteins that binds to the 5S RNA in the ribosome where it forms part of the central protuberance. This is Large ribosomal subunit protein bL25 from Bifidobacterium longum (strain DJO10A).